A 380-amino-acid polypeptide reads, in one-letter code: Glucose-1-phosphate adenylyltransferase (380 aa).

Residues Gly164, 179 to 180 (EK), and Ser190 contribute to the alpha-D-glucose 1-phosphate site.

It belongs to the bacterial/plant glucose-1-phosphate adenylyltransferase family. As to quaternary structure, homotetramer.

It catalyses the reaction alpha-D-glucose 1-phosphate + ATP + H(+) = ADP-alpha-D-glucose + diphosphate. It participates in glycan biosynthesis; glycogen biosynthesis. In terms of biological role, involved in the biosynthesis of ADP-glucose, a building block required for the elongation reactions to produce glycogen. Catalyzes the reaction between ATP and alpha-D-glucose 1-phosphate (G1P) to produce pyrophosphate and ADP-Glc. This is Glucose-1-phosphate adenylyltransferase from Lactococcus lactis subsp. cremoris (strain MG1363).